We begin with the raw amino-acid sequence, 2904 residues long: Protein eyes shut homolog (2904 aa).

An N-terminal signal peptide occupies residues 1–23 (MRNPKLAIIVFLLSCVIYGPVYS). Residues asparagine 41 and asparagine 135 are each glycosylated (N-linked (GlcNAc...) asparagine). 4 EGF-like domains span residues 174–216 (KPQL…RYCE), 217–259 (NVDG…VNCS), 263–298 (GNQNCSKWCKEGACLKVSSTSYRCECFTGYTGTYCE), and 300–336 (KRLFCDSNPCRNDGRCEETANGYVCTCPGGFTGLNCE). 6 disulfides stabilise this stretch: cysteine 178-cysteine 193, cysteine 187-cysteine 204, cysteine 206-cysteine 215, cysteine 221-cysteine 232, cysteine 226-cysteine 247, and cysteine 249-cysteine 258. Asparagine 257 and asparagine 266 each carry an N-linked (GlcNAc...) asparagine glycan. 6 disulfides stabilise this stretch: cysteine 267–cysteine 276, cysteine 271–cysteine 286, cysteine 288–cysteine 297, cysteine 304–cysteine 315, cysteine 309–cysteine 324, and cysteine 326–cysteine 335. Asparagine 362 carries N-linked (GlcNAc...) asparagine glycosylation. EGF-like domains lie at 375–411 (QAEVCGTLPCLNGGICVVPNGQYHCRCRQGFSGKNCE), 413–451 (IIDFCKLLNINCLNEGLCLNRVGGYNCLCAPGWTGEFCQ), and 453–496 (LENA…PYCE). 12 disulfides stabilise this stretch: cysteine 379–cysteine 390, cysteine 384–cysteine 399, cysteine 401–cysteine 410, cysteine 417–cysteine 430, cysteine 424–cysteine 439, cysteine 441–cysteine 450, cysteine 457–cysteine 470, cysteine 464–cysteine 484, cysteine 486–cysteine 495, cysteine 502–cysteine 513, cysteine 507–cysteine 522, and cysteine 524–cysteine 533. Residues 498 to 534 (EVNECDSSPCQHQGTCTDFVGYYKCTCPSGYTGIDCE) enclose the EGF-like 8; calcium-binding domain. Asparagine 544 carries an N-linked (GlcNAc...) asparagine glycan. Residues 565–603 (HTPCPHYLQPCANGGHCVLHNITSYSCVCAPGWTGATCL) enclose the EGF-like 9 domain. 78 disulfide bridges follow: cysteine 568–cysteine 581, cysteine 575–cysteine 591, cysteine 593–cysteine 602, cysteine 609–cysteine 620, cysteine 614–cysteine 629, cysteine 631–cysteine 640, cysteine 645–cysteine 656, cysteine 650–cysteine 665, cysteine 667–cysteine 676, cysteine 683–cysteine 694, cysteine 688–cysteine 703, cysteine 705–cysteine 714, cysteine 721–cysteine 732, cysteine 726–cysteine 741, cysteine 743–cysteine 752, cysteine 759–cysteine 772, cysteine 764–cysteine 781, cysteine 783–cysteine 792, cysteine 799–cysteine 810, cysteine 804–cysteine 819, cysteine 821–cysteine 830, cysteine 837–cysteine 848, cysteine 842–cysteine 857, cysteine 859–cysteine 868, cysteine 875–cysteine 886, cysteine 880–cysteine 895, cysteine 897–cysteine 906, cysteine 913–cysteine 924, cysteine 918–cysteine 933, cysteine 935–cysteine 944, cysteine 951–cysteine 962, cysteine 956–cysteine 971, cysteine 973–cysteine 982, cysteine 987–cysteine 999, cysteine 993–cysteine 1014, cysteine 1016–cysteine 1025, cysteine 1032–cysteine 1042, cysteine 1037–cysteine 1051, cysteine 1053–cysteine 1062, cysteine 1069–cysteine 1080, cysteine 1074–cysteine 1089, cysteine 1091–cysteine 1100, cysteine 1107–cysteine 1118, cysteine 1112–cysteine 1127, cysteine 1129–cysteine 1138, cysteine 1145–cysteine 1156, cysteine 1150–cysteine 1167, cysteine 1169–cysteine 1178, cysteine 1185–cysteine 1198, cysteine 1192–cysteine 1208, cysteine 1210–cysteine 1219, cysteine 1226–cysteine 1237, cysteine 1231–cysteine 1246, cysteine 1248–cysteine 1257, cysteine 1264–cysteine 1275, cysteine 1269–cysteine 1284, cysteine 1286–cysteine 1295, cysteine 1302–cysteine 1313, cysteine 1307–cysteine 1322, cysteine 1324–cysteine 1333, cysteine 1340–cysteine 1351, cysteine 1345–cysteine 1360, cysteine 1362–cysteine 1371, cysteine 1378–cysteine 1388, cysteine 1383–cysteine 1397, cysteine 1399–cysteine 1408, cysteine 1415–cysteine 1426, cysteine 1420–cysteine 1435, cysteine 1437–cysteine 1446, cysteine 1453–cysteine 1469, cysteine 1463–cysteine 1479, cysteine 1481–cysteine 1490, cysteine 1497–cysteine 1508, cysteine 1502–cysteine 1517, cysteine 1519–cysteine 1528, cysteine 1535–cysteine 1545, cysteine 1540–cysteine 1556, and cysteine 1558–cysteine 1567. Asparagine 585 is a glycosylation site (N-linked (GlcNAc...) asparagine). An EGF-like 10; calcium-binding domain is found at 605 to 641 (NINECVQHRCQNRATCVDEVGGYSCLCGHGYTGVHCE). One can recognise an EGF-like 11 domain in the interval 642 to 677 (LDFCSGHQCSEHAVCVDQQHNYTCRCMLGYEGTLCE). An N-linked (GlcNAc...) asparagine glycan is attached at asparagine 662. The EGF-like 12; calcium-binding domain occupies 679–715 (ETDECKSAPCTNNATCIDLVAGYQCLCAPGFKGRTCS). Residue asparagine 691 is glycosylated (N-linked (GlcNAc...) asparagine). EGF-like domains are found at residues 717-753 (SMNECWSRPCNNGGSCIDLVNDYICNCPLGFTGHDCS), 755-793 (PATGCTSNPCNTKGTSMCEEQQDGFKCVCHHGYTGLFCE), and 795-831 (SINHCVEGLCHHGSECVDLTKGFMCECLPGLRGRLCE). Residues 833–869 (NIDDCLDKPCGALSICKDGINAYDCFCAPGFVGNNCE) form the EGF-like 16; calcium-binding domain. Residues 871–907 (EVNECLSQPCQNGASCSDELNSFSCLCLAGTTGSLCE) form the EGF-like 17; calcium-binding domain. The EGF-like 18; calcium-binding domain maps to 909–945 (NIDECQSSPCMNNGTCLDLSDGFKCICPSGFSGPECS). N-linked (GlcNAc...) asparagine glycosylation occurs at asparagine 921. In terms of domain architecture, EGF-like 19; calcium-binding spans 947 to 983 (DINECVSYPCKNGGSCIDQPGNYYCRCLAPFKGLNCE). Residues 984-1026 (LLPCEAVNPCDNGAECVEEADLVLFPLGFQCRCRKGFTGPRCE) form the EGF-like 20 domain. An EGF-like 21; calcium-binding domain is found at 1028-1063 (NIDECSSNPCLNGFCYDAVDGFYCLCNPGYAGVRCE). An EGF-like 22 domain is found at 1065-1101 (HINDCASNMCENNSTCVDLHLSYNCLCLPGWEGEYCQ). N-linked (GlcNAc...) asparagine glycosylation is present at asparagine 1077. Positions 1103–1139 (ETNECLSNPCKNNATCTDLLNAYRCVCPQGWTGLDCD) constitute an EGF-like 23; calcium-binding domain. N-linked (GlcNAc...) asparagine glycosylation is present at asparagine 1115. 2 EGF-like domains span residues 1141 to 1179 (DVKECSSSPCLNGAHCVESDTPGEFSCTCPPFFTGPLCE) and 1181 to 1220 (PYDPCELQRNPCLHNSTCRAQSDGTALCVCPVGFEGTRCE). An N-linked (GlcNAc...) asparagine glycan is attached at asparagine 1195. One can recognise an EGF-like 26; calcium-binding domain in the interval 1222 to 1258 (DSDDCVSRPCQNRGICVDGVNSYSCFCEPGFSGLHCE). The EGF-like 27; calcium-binding domain maps to 1260-1296 (DINECASNPCQNQAVCQDLVNGFQCSCVPGYFGPHCN). The EGF-like 28; calcium-binding domain occupies 1298–1334 (DVNECDSSPCLHESVCINKPGGFACVCSAGFSGKWCE). Residues 1336–1372 (NVDECKSNPCRNNGSCIDGLNGYQCVCSRGFMGDHCE) form the EGF-like 29; calcium-binding domain. A glycan (N-linked (GlcNAc...) asparagine) is linked at asparagine 1348. Residues 1374-1409 (NTDECSSGPCVHGSCLDEIDAFSCQCEVGWTGHRCQ) enclose the EGF-like 30; calcium-binding domain. One can recognise an EGF-like 31; calcium-binding domain in the interval 1411–1447 (NINECEAHPCLNGGSCVDLLDKYACICADGFTGKNCD). An EGF-like 32 domain is found at 1449 to 1491 (DQNVCLQTSLNFSLCFNGGTCVDGPGVNFTCSCRPGFMGDFCE). 2 N-linked (GlcNAc...) asparagine glycosylation sites follow: asparagine 1459 and asparagine 1476. One can recognise an EGF-like 33; calcium-binding domain in the interval 1493–1529 (EMNECCSEPCFNGAICQDLINGYQCHCRPGWTGLHCE). The region spanning 1531-1568 (DINECLLQPCNQGMCIQNEPGHGYTCFCRPGFVGENCE) is the EGF-like 34 domain. 3 N-linked (GlcNAc...) asparagine glycosylation sites follow: asparagine 1591, asparagine 1755, and asparagine 1788. The Laminin G-like 1 domain maps to 1640–1818 (ASFGGYSGNS…AIARNNVDNC (179 aa)). Cystine bridges form between cysteine 1792-cysteine 1818, cysteine 1860-cysteine 1871, cysteine 1865-cysteine 1885, and cysteine 1887-cysteine 1896. Positions 1856–1897 (PAPVCPQGICLNGGTCRPVSLPSGASSFFCDCPLHFTGRLCE) constitute an EGF-like 35 domain. Residues 1902–2102 (VFSPRFDGNS…NIQNCDAAVC (201 aa)) enclose the Laminin G-like 2 domain. 2 N-linked (GlcNAc...) asparagine glycosylation sites follow: asparagine 2025 and asparagine 2064. 7 disulfides stabilise this stretch: cysteine 2071/cysteine 2102, cysteine 2102/cysteine 2113, cysteine 2107/cysteine 2122, cysteine 2124/cysteine 2133, cysteine 2138/cysteine 2149, cysteine 2143/cysteine 2159, and cysteine 2161/cysteine 2170. 2 consecutive EGF-like domains span residues 2098 to 2134 (DAAVCQHQPCRNGGTCISDAESWFCACPSLYSGKLCQ) and 2135 to 2171 (FTACERNPCARGATCVPQTQLEAACLCPYGRQGLLCD). Asparagine 2175 and asparagine 2216 each carry an N-linked (GlcNAc...) asparagine glycan. The Laminin G-like 3 domain occupies 2182 to 2372 (SGLDEFGYSS…PLSGRNVGQC (191 aa)). Intrachain disulfides connect cysteine 2339–cysteine 2372, cysteine 2377–cysteine 2388, cysteine 2382–cysteine 2397, cysteine 2399–cysteine 2408, cysteine 2415–cysteine 2431, cysteine 2425–cysteine 2440, and cysteine 2442–cysteine 2451. EGF-like domains are found at residues 2373–2409 (GVNPCSLVFCHNGGTCVDSGSSVYCQCVFGWKGALCS) and 2411–2452 (KVSF…LHCQ). Residues 2459 to 2642 (DPFFSGNQSS…NVGDWDGTAC (184 aa)) enclose the Laminin G-like 4 domain. Residues asparagine 2465, asparagine 2528, and asparagine 2570 are each glycosylated (N-linked (GlcNAc...) asparagine). 2 consecutive EGF-like domains span residues 2638-2675 (DGTACGYKVCKNGGHCHPSGDFSFTCICPSLWTGSRCQ) and 2676-2714 (QSIQCLNNLCQHNSVCIHNSTSASYSCMCSLGWTGTHCD). 6 disulfides stabilise this stretch: cysteine 2642/cysteine 2653, cysteine 2647/cysteine 2663, cysteine 2665/cysteine 2674, cysteine 2680/cysteine 2691, cysteine 2685/cysteine 2702, and cysteine 2704/cysteine 2713. An N-linked (GlcNAc...) asparagine glycan is attached at asparagine 2694. A Laminin G-like 5 domain is found at 2719–2894 (LKTIRFIGNS…TKQLQFLQTC (176 aa)). Residues asparagine 2750 and asparagine 2816 are each glycosylated (N-linked (GlcNAc...) asparagine).

Belongs to the EYS family. Expressed in retina where it localizes between the retinal pigment epithelium and the outer nuclear layer (at protein level).

Its subcellular location is the cell projection. The protein localises to the cilium. It localises to the cytoplasm. It is found in the cytoskeleton. The protein resides in the cilium axoneme. Its subcellular location is the secreted. The protein localises to the extracellular space. It localises to the extracellular matrix. It is found in the interphotoreceptor matrix. Required to maintain the integrity of photoreceptor cells. Specifically required for normal morphology of the photoreceptor ciliary pocket, and might thus facilitate protein trafficking between the photoreceptor inner and outer segments via the transition zone. The chain is Protein eyes shut homolog from Danio rerio (Zebrafish).